The following is a 1051-amino-acid chain: Carbamoyl phosphate synthase large chain (1051 aa).

The carboxyphosphate synthetic domain stretch occupies residues Met1–Asp399. ATP contacts are provided by Arg127, Arg167, Gly173, Gly174, Lys206, Leu208, Glu213, Gly239, Val240, His241, Gln282, and Glu296. Residues Arg131–Leu325 form the ATP-grasp 1 domain. Gln282, Glu296, and Asn298 together coordinate Mg(2+). Residues Gln282, Glu296, and Asn298 each coordinate Mn(2+). Residues Ile400–Leu548 form an oligomerization domain region. The carbamoyl phosphate synthetic domain stretch occupies residues Glu549–Asn930. The ATP-grasp 2 domain occupies Ser673–Phe863. ATP is bound by residues Arg709, Lys748, Ile750, Glu755, Gly779, Val780, His781, Ser782, Gln822, and Glu834. Mg(2+)-binding residues include Gln822, Glu834, and Asn836. Residues Gln822, Glu834, and Asn836 each contribute to the Mn(2+) site. The 122-residue stretch at Asn930–Ile1051 folds into the MGS-like domain. Residues Arg931–Ile1051 form an allosteric domain region.

It belongs to the CarB family. Composed of two chains; the small (or glutamine) chain promotes the hydrolysis of glutamine to ammonia, which is used by the large (or ammonia) chain to synthesize carbamoyl phosphate. Tetramer of heterodimers (alpha,beta)4. Requires Mg(2+) as cofactor. Mn(2+) is required as a cofactor.

It catalyses the reaction hydrogencarbonate + L-glutamine + 2 ATP + H2O = carbamoyl phosphate + L-glutamate + 2 ADP + phosphate + 2 H(+). It carries out the reaction hydrogencarbonate + NH4(+) + 2 ATP = carbamoyl phosphate + 2 ADP + phosphate + 2 H(+). Its pathway is amino-acid biosynthesis; L-arginine biosynthesis; carbamoyl phosphate from bicarbonate: step 1/1. The protein operates within pyrimidine metabolism; UMP biosynthesis via de novo pathway; (S)-dihydroorotate from bicarbonate: step 1/3. Functionally, large subunit of the glutamine-dependent carbamoyl phosphate synthetase (CPSase). CPSase catalyzes the formation of carbamoyl phosphate from the ammonia moiety of glutamine, carbonate, and phosphate donated by ATP, constituting the first step of 2 biosynthetic pathways, one leading to arginine and/or urea and the other to pyrimidine nucleotides. The large subunit (synthetase) binds the substrates ammonia (free or transferred from glutamine from the small subunit), hydrogencarbonate and ATP and carries out an ATP-coupled ligase reaction, activating hydrogencarbonate by forming carboxy phosphate which reacts with ammonia to form carbamoyl phosphate. The polypeptide is Carbamoyl phosphate synthase large chain (Saccharolobus islandicus (strain L.S.2.15 / Lassen #1) (Sulfolobus islandicus)).